We begin with the raw amino-acid sequence, 490 residues long: MPNEIFPWKIRVDESRGLAGNSGTKKSNHEALSRLQSPLNSPKLQPIGSPQASRKTSGSGSSAPLYPKWSGALSLASSRAASPAPSDSFPTFGYSQLGGLENSSKGSALFNSANSIGTPYLSSRNSNSANEASAMAFHNVSPPSGAESSSESKSFSASGKGNKADTSAEPSLDAFNSTQIKAGSTANSNSTPVEPGEDTIPTAIVVKNIPFSLEKDTLLDHFKQLGIPRPYAFNYHYDNGIFRGLAFANFYRPEEAQVVVQTLNGYEINGRRLRVEWKRQLPAAEREKVEKAKKRQAEERRRKQQYKMFEVSFTDQGLNLNDTGTLETYSRLLLFAHQCIPSREITFETTSKDGNLLNAIRIFCLYFDLDYYARPNGEVLKLVVTHPNKKNTSVSQSQPASPNLRFNMPAPLATRFLQEHSLNGTKSAPITPPPSFAVPLTNQLRSIDDKIYGNESPLQKASTLSSPFNSKNDNDASTSASKQSFGVSHF.

Disordered stretches follow at residues 16 to 63, 76 to 97, and 138 to 199; these read RGLA…GSSA, ASSR…YSQL, and HNVS…GEDT. Over residues 34-62 the composition is skewed to polar residues; that stretch reads RLQSPLNSPKLQPIGSPQASRKTSGSGSS. A phosphoserine mark is found at serine 37, serine 41, serine 49, serine 86, and serine 141. 2 stretches are compositionally biased toward low complexity: residues 76–88 and 141–160; these read ASSR…PSDS and SPPS…ASGK. A compositionally biased stretch (polar residues) spans 164–192; the sequence is ADTSAEPSLDAFNSTQIKAGSTANSNSTP. In terms of domain architecture, RRM spans 202 to 280; that stretch reads TAIVVKNIPF…RRLRVEWKRQ (79 aa). 3 positions are modified to phosphoserine: serine 397, serine 401, and serine 427. Residue threonine 431 is modified to Phosphothreonine. Phosphoserine is present on residues serine 435, serine 456, and serine 466. Residues 457–490 form a disordered region; it reads PLQKASTLSSPFNSKNDNDASTSASKQSFGVSHF.

Interacts with csx1. In terms of processing, phosphorylated by sty1.

It localises to the cytoplasm. In terms of biological role, regulates global gene expression after oxidative stress. Interacts and stabilizes mRNAs and may regulate their transition between different cytoplasmic components after oxidative stress. This is RNA-binding post-transcriptional regulator cip1 (cip1) from Schizosaccharomyces pombe (strain 972 / ATCC 24843) (Fission yeast).